The following is a 432-amino-acid chain: Glutamyl-tRNA reductase (432 aa).

Residues 55–58 (TCNR), S114, 119–121 (ETQ), and Q125 each bind substrate. Residue C56 is the Nucleophile of the active site. 194–199 (GAGEMI) contacts NADP(+).

Belongs to the glutamyl-tRNA reductase family. Homodimer.

The enzyme catalyses (S)-4-amino-5-oxopentanoate + tRNA(Glu) + NADP(+) = L-glutamyl-tRNA(Glu) + NADPH + H(+). It functions in the pathway porphyrin-containing compound metabolism; protoporphyrin-IX biosynthesis; 5-aminolevulinate from L-glutamyl-tRNA(Glu): step 1/2. Catalyzes the NADPH-dependent reduction of glutamyl-tRNA(Glu) to glutamate 1-semialdehyde (GSA). The chain is Glutamyl-tRNA reductase from Burkholderia pseudomallei (strain 1710b).